We begin with the raw amino-acid sequence, 56 residues long: Large ribosomal subunit protein bL32 (56 aa).

A disordered region spans residues 1–35 (MAVQQNKPTRSKRGMRRSHDALTATHVSVDKTSGE).

This sequence belongs to the bacterial ribosomal protein bL32 family.

This Proteus mirabilis (strain HI4320) protein is Large ribosomal subunit protein bL32.